The chain runs to 106 residues: Large ribosomal subunit protein uL24 (106 aa).

Belongs to the universal ribosomal protein uL24 family. Part of the 50S ribosomal subunit.

One of two assembly initiator proteins, it binds directly to the 5'-end of the 23S rRNA, where it nucleates assembly of the 50S subunit. Functionally, one of the proteins that surrounds the polypeptide exit tunnel on the outside of the subunit. This Paramagnetospirillum magneticum (strain ATCC 700264 / AMB-1) (Magnetospirillum magneticum) protein is Large ribosomal subunit protein uL24.